A 119-amino-acid chain; its full sequence is Cytochrome c55X (119 aa).

An N-terminal signal peptide occupies residues 1 to 20; sequence MNAPPDFRRAASHALWLALA. Cys-51, Cys-54, and His-55 together coordinate heme c.

Binds 1 heme c group covalently per subunit.

It is found in the periplasm. Functionally, monoheme c-type cytochrome. The polypeptide is Cytochrome c55X (nirC) (Pseudomonas aeruginosa (strain ATCC 15692 / DSM 22644 / CIP 104116 / JCM 14847 / LMG 12228 / 1C / PRS 101 / PAO1)).